Reading from the N-terminus, the 267-residue chain is Glucosamine-6-phosphate deaminase (267 aa).

Asp72 (proton acceptor; for enolization step) is an active-site residue. The For ring-opening step role is filled by Asp141. The Proton acceptor; for ring-opening step role is filled by His143. Catalysis depends on Glu148, which acts as the For ring-opening step.

Belongs to the glucosamine/galactosamine-6-phosphate isomerase family. NagB subfamily. In terms of assembly, homohexamer.

The enzyme catalyses alpha-D-glucosamine 6-phosphate + H2O = beta-D-fructose 6-phosphate + NH4(+). It functions in the pathway amino-sugar metabolism; N-acetylneuraminate degradation; D-fructose 6-phosphate from N-acetylneuraminate: step 5/5. With respect to regulation, allosterically activated by N-acetylglucosamine 6-phosphate (GlcNAc6P). Catalyzes the reversible isomerization-deamination of glucosamine 6-phosphate (GlcN6P) to form fructose 6-phosphate (Fru6P) and ammonium ion. This is Glucosamine-6-phosphate deaminase from Mannheimia succiniciproducens (strain KCTC 0769BP / MBEL55E).